Here is a 120-residue protein sequence, read N- to C-terminus: Large ribosomal subunit protein bL12 (120 aa).

The protein belongs to the bacterial ribosomal protein bL12 family. As to quaternary structure, homodimer. Part of the ribosomal stalk of the 50S ribosomal subunit. Forms a multimeric L10(L12)X complex, where L10 forms an elongated spine to which 2 to 4 L12 dimers bind in a sequential fashion. Binds GTP-bound translation factors.

Forms part of the ribosomal stalk which helps the ribosome interact with GTP-bound translation factors. Is thus essential for accurate translation. The polypeptide is Large ribosomal subunit protein bL12 (Listeria monocytogenes serovar 1/2a (strain ATCC BAA-679 / EGD-e)).